Consider the following 319-residue polypeptide: Polyprenal reductase (319 aa).

The Cytoplasmic portion of the chain corresponds to 1–12; the sequence is MQLVQLLPPGVS. The chain crosses the membrane as a helical span at residues 13-33; the sequence is LLALVWLAVDAAFLTALLLYL. Residues 34-79 lie on the Lumenal side of the membrane; it reads QRGCDSGRSLLCSVFQDLIRYGKTKSGLRRPSWLQWFDIPKRCFWH. A helical membrane pass occupies residues 80-100; that stretch reads FYFVSLVWNGFLLWILLHLLL. Topologically, residues 101-122 are cytoplasmic; sequence QSVPVPEWLQAVLQFLCAGSEP. A helical membrane pass occupies residues 123 to 143; the sequence is QVLGGELSVVLAFSLLWLHSL. At 144-158 the chain is on the lumenal side; sequence RRLLECLFVSIFSNG. Residues 159–179 form a helical membrane-spanning segment; sequence VIHFVQYCFGLGYYILIGFTI. The Cytoplasmic portion of the chain corresponds to 180 to 195; that stretch reads LGYCPLDRRTAVSLDD. A helical transmembrane segment spans residues 196 to 216; sequence LLMQGNWYHILGLTLYVWASL. The Lumenal portion of the chain corresponds to 217 to 266; it reads HQYTCHCILADLRKSASGAIINLKHAVPTGDWFEKVSCPHYFAELLIYLS. A helical transmembrane segment spans residues 267-287; it reads IAVVFGLLNTIWWLVVLYVLL. Residues 288–319 lie on the Cytoplasmic side of the membrane; it reads SQALAAVLCHEFYHEKFDSYPIHRKAFIPLIF.

Belongs to the steroid 5-alpha reductase family. Polyprenal reductase subfamily.

It is found in the endoplasmic reticulum membrane. The catalysed reaction is a di-trans,poly-cis-dolichal + NADP(+) = a di-trans,poly-cis-polyprenal + NADPH + H(+). It catalyses the reaction a 3-oxo-5alpha-steroid + NADP(+) = a 3-oxo-Delta(4)-steroid + NADPH + H(+). It carries out the reaction androst-4-ene-3,17-dione + NADPH + H(+) = 5alpha-androstan-3,17-dione + NADP(+). The enzyme catalyses 17beta-hydroxy-5alpha-androstan-3-one + NADP(+) = testosterone + NADPH + H(+). It participates in protein modification; protein glycosylation. In terms of biological role, plays a key role in early steps of protein N-linked glycosylation by being involved in the conversion of polyprenol into dolichol. Acts as a polyprenal reductase that mediates the reduction of polyprenal into dolichal in a NADP-dependent mechanism. Dolichols are required for the synthesis of dolichol-linked monosaccharides and the oligosaccharide precursor used for N-glycosylation. Also able to convert testosterone (T) into 5-alpha-dihydrotestosterone (DHT). The polypeptide is Polyprenal reductase (srd5a3) (Xenopus laevis (African clawed frog)).